The primary structure comprises 112 residues: Protein Tat (112 aa).

Positions 1 to 24 (MDPVDPEMPPWHHPGSKPQTPCNN) are interaction with human CREBBP. The interval 1–48 (MDPVDPEMPPWHHPGSKPQTPCNNCYCKRCCYHCYVCFTKKGLGISHG) is transactivation. 3 residues coordinate Zn(2+): C22, C25, and C27. The cysteine-rich stretch occupies residues 22–37 (CNNCYCKRCCYHCYVC). K28 bears the N6-acetyllysine; by host PCAF mark. Zn(2+) contacts are provided by C30, H33, C34, and C37. The interval 38 to 48 (FTKKGLGISHG) is core. Positions 45-112 (ISHGRKKRRR…CNSCTRISGQ (68 aa)) are disordered. Residues 49 to 56 (RKKRRRPA) carry the Nuclear localization signal, RNA-binding (TAR), and protein transduction motif. An interaction with the host capping enzyme RNGTT region spans residues 49 to 82 (RKKRRRPAAAASYPDNKDPVPEQHTGRKQKRQEE). An N6-acetyllysine; by host EP300 and GCN5L2 mark is found at K50 and K51. Residues R52 and R53 each carry the asymmetric dimethylarginine; by host PRMT6 modification. Residues 63-91 (DNKDPVPEQHTGRKQKRQEEQEKKVEKET) are compositionally biased toward basic and acidic residues. Positions 93–112 (PSGQPCHQDSCNSCTRISGQ) are enriched in polar residues.

Belongs to the lentiviruses Tat family. In terms of assembly, interacts with host CCNT1. Associates with the P-TEFb complex composed at least of Tat, P-TEFb (CDK9 and CCNT1), TAR RNA, RNA Pol II. Recruits the HATs CREBBP, TAF1/TFIID, EP300, PCAF and GCN5L2. Interacts with host KAT5/Tip60; this interaction targets the latter to degradation. Interacts with the host deacetylase SIRT1. Interacts with host capping enzyme RNGTT; this interaction stimulates RNGTT. Binds to host KDR, and to the host integrins ITGAV/ITGB3 and ITGA5/ITGB1. Interacts with host KPNB1/importin beta-1 without previous binding to KPNA1/importin alpha-1. Interacts with EIF2AK2. Interacts with host nucleosome assembly protein NAP1L1; this interaction may be required for the transport of Tat within the nucleus, since the two proteins interact at the nuclear rim. Interacts with host C1QBP/SF2P32; this interaction involves lysine-acetylated Tat. Interacts with the host chemokine receptors CCR2, CCR3 and CXCR4. Interacts with host DPP4/CD26; this interaction may trigger an anti-proliferative effect. Interacts with host LDLR. Interacts with the host extracellular matrix metalloproteinase MMP1. Interacts with host PRMT6; this interaction mediates Tat's methylation. Interacts with, and is ubiquitinated by MDM2/Hdm2. Interacts with host PSMC3 and HTATIP2. Interacts with STAB1; this interaction may overcome SATB1-mediated repression of IL2 and IL2RA (interleukin) in T cells by binding to the same domain than HDAC1. Interacts (when acetylated) with human CDK13, thereby increasing HIV-1 mRNA splicing and promoting the production of the doubly spliced HIV-1 protein Nef. Interacts with host TBP; this interaction modulates the activity of transcriptional pre-initiation complex. Interacts with host RELA. Interacts with host PLSCR1; this interaction negatively regulates Tat transactivation activity by altering its subcellular distribution. Asymmetrical arginine methylation by host PRMT6 seems to diminish the transactivation capacity of Tat and affects the interaction with host CCNT1. In terms of processing, acetylation by EP300, CREBBP, GCN5L2/GCN5 and PCAF regulates the transactivation activity of Tat. EP300-mediated acetylation of Lys-50 promotes dissociation of Tat from the TAR RNA through the competitive binding to PCAF's bromodomain. In addition, the non-acetylated Tat's N-terminus can also interact with PCAF. PCAF-mediated acetylation of Lys-28 enhances Tat's binding to CCNT1. Lys-50 is deacetylated by SIRT1. Post-translationally, polyubiquitination by host MDM2 does not target Tat to degradation, but activates its transactivation function and fosters interaction with CCNT1 and TAR RNA. Phosphorylated by EIF2AK2 on serine and threonine residues adjacent to the basic region important for TAR RNA binding and function. Phosphorylation of Tat by EIF2AK2 is dependent on the prior activation of EIF2AK2 by dsRNA.

It is found in the host nucleus. The protein resides in the host nucleolus. The protein localises to the host cytoplasm. It localises to the secreted. In terms of biological role, transcriptional activator that increases RNA Pol II processivity, thereby increasing the level of full-length viral transcripts. Recognizes a hairpin structure at the 5'-LTR of the nascent viral mRNAs referred to as the transactivation responsive RNA element (TAR) and recruits the cyclin T1-CDK9 complex (P-TEFb complex) that will in turn hyperphosphorylate the RNA polymerase II to allow efficient elongation. The CDK9 component of P-TEFb and other Tat-activated kinases hyperphosphorylate the C-terminus of RNA Pol II that becomes stabilized and much more processive. Other factors such as HTATSF1/Tat-SF1, SUPT5H/SPT5, and HTATIP2 are also important for Tat's function. Besides its effect on RNA Pol II processivity, Tat induces chromatin remodeling of proviral genes by recruiting the histone acetyltransferases (HATs) CREBBP, EP300 and PCAF to the chromatin. This also contributes to the increase in proviral transcription rate, especially when the provirus integrates in transcriptionally silent region of the host genome. To ensure maximal activation of the LTR, Tat mediates nuclear translocation of NF-kappa-B by interacting with host RELA. Through its interaction with host TBP, Tat may also modulate transcription initiation. Tat can reactivate a latently infected cell by penetrating in it and transactivating its LTR promoter. In the cytoplasm, Tat is thought to act as a translational activator of HIV-1 mRNAs. Functionally, extracellular circulating Tat can be endocytosed by surrounding uninfected cells via the binding to several surface receptors such as CD26, CXCR4, heparan sulfate proteoglycans (HSPG) or LDLR. Neurons are rarely infected, but they internalize Tat via their LDLR. Through its interaction with nuclear HATs, Tat is potentially able to control the acetylation-dependent cellular gene expression. Modulates the expression of many cellular genes involved in cell survival, proliferation or in coding for cytokines or cytokine receptors. Tat plays a role in T-cell and neurons apoptosis. Tat induced neurotoxicity and apoptosis probably contribute to neuroAIDS. Circulating Tat also acts as a chemokine-like and/or growth factor-like molecule that binds to specific receptors on the surface of the cells, affecting many cellular pathways. In the vascular system, Tat binds to ITGAV/ITGB3 and ITGA5/ITGB1 integrins dimers at the surface of endothelial cells and competes with bFGF for heparin-binding sites, leading to an excess of soluble bFGF. This chain is Protein Tat, found in Homo sapiens (Human).